Consider the following 344-residue polypeptide: DNA-directed RNA polymerase subunit alpha (344 aa).

An alpha N-terminal domain (alpha-NTD) region spans residues 1–239 (MADHWNKLTR…DQLQSFISFD (239 aa)). An alpha C-terminal domain (alpha-CTD) region spans residues 254 to 344 (VLPYDHNLLR…ENLSKQYSED (91 aa)).

This sequence belongs to the RNA polymerase alpha chain family. In terms of assembly, homodimer. The RNAP catalytic core consists of 2 alpha, 1 beta, 1 beta' and 1 omega subunit. When a sigma factor is associated with the core the holoenzyme is formed, which can initiate transcription.

It catalyses the reaction RNA(n) + a ribonucleoside 5'-triphosphate = RNA(n+1) + diphosphate. Its function is as follows. DNA-dependent RNA polymerase catalyzes the transcription of DNA into RNA using the four ribonucleoside triphosphates as substrates. This is DNA-directed RNA polymerase subunit alpha from Anaplasma phagocytophilum (strain HZ).